We begin with the raw amino-acid sequence, 579 residues long: Vacuolar protein 8 (579 aa).

Residue Gly-2 is the site of N-myristoyl glycine attachment. 3 S-palmitoyl cysteine lipidation sites follow: Cys-4, Cys-5, and Cys-7. 9 ARM repeats span residues 39-76 (NKDQ…FAEI), 77-116 (TEKY…NLAV), 118-157 (NENK…NLAT), 159-198 (DDNK…NMTH), 200-239 (GENR…NIAV), 241-282 (ESNR…NLAS), 284-323 (TNYQ…NISI), 325-365 (PLNE…NLAA), and 409-448 (DNTK…NLIS). The span at 534–556 (QDTNIDHNGNSNNIEGNGRSNKQ) shows a compositional bias: polar residues. Positions 534–560 (QDTNIDHNGNSNNIEGNGRSNKQSSEK) are disordered.

The protein belongs to the beta-catenin family.

The protein resides in the vacuole membrane. In terms of biological role, functions in both vacuole inheritance and protein targeting from the cytoplasm to vacuole. In Kluyveromyces lactis (strain ATCC 8585 / CBS 2359 / DSM 70799 / NBRC 1267 / NRRL Y-1140 / WM37) (Yeast), this protein is Vacuolar protein 8 (VAC8).